We begin with the raw amino-acid sequence, 906 residues long: Centromere protein C (906 aa).

2 stretches are compositionally biased toward polar residues: residues 56–74 (SLTS…SSSK) and 87–96 (SSRTGEASLQ). 2 disordered regions span residues 56–115 (SLTS…NEVH) and 141–169 (QKAA…NKNI). Phosphoserine is present on residues Ser71 and Ser94. Residues 97–108 (ASAEPSEAAGGS) show a composition bias toward low complexity. Residues Lys150 and Lys182 each participate in a glycyl lysine isopeptide (Lys-Gly) (interchain with G-Cter in SUMO2) cross-link. Positions 197–224 (VEDNLSKGQEGTSSEITQKRDDLSSDVQ) are disordered. Over residues 202-212 (SKGQEGTSSEI) the composition is skewed to polar residues. The short motif at 228–242 (KKNFSELFLETVKRK) is the Nuclear localization signal element. Glycyl lysine isopeptide (Lys-Gly) (interchain with G-Cter in SUMO2) cross-links involve residues Lys229, Lys240, Lys242, and Lys266. Disordered regions lie at residues 294–320 (RHLS…KSHS), 341–596 (AQLS…SLAI), and 623–671 (EYTS…EQDQ). 4 positions are modified to phosphoserine: Ser302, Ser344, Ser363, and Ser404. Polar residues predominate over residues 402 to 424 (GQSSWENSNVSNTGQDKLQINSK). Basic and acidic residues predominate over residues 426-450 (NMKDCEEVRNEPNPKKQKPALENKK). Residues 449–466 (KKKTNSTQTNKEKSGKKF) carry the Nuclear localization signal motif. A compositionally biased stretch (low complexity) spans 465-474 (KFFSGGSKNK). Positions 481-494 (TLTSRRSCRISQRP) are enriched in polar residues. A Phosphoserine modification is found at Ser495. Positions 496–512 (EWWRVKSDESSVDRNPS) are enriched in basic and acidic residues. A Glycyl lysine isopeptide (Lys-Gly) (interchain with G-Cter in SUMO2) cross-link involves residue Lys501. Ser505 is subject to Phosphoserine. The segment covering 523-546 (NKKKQTKRNHVSKRAGKKPGSSKR) has biased composition (basic residues). Residues 525–540 (KKQTKRNHVSKRAGKK) carry the Nuclear localization signal motif. A compositionally biased stretch (polar residues) spans 626–637 (SKTQMESASNSE). Lys640 is covalently cross-linked (Glycyl lysine isopeptide (Lys-Gly) (interchain with G-Cter in SUMO2)). Phosphoserine occurs at positions 647 and 673. Residue Lys692 forms a Glycyl lysine isopeptide (Lys-Gly) (interchain with G-Cter in SUMO2) linkage. The segment at 702–724 (VRRSNRIRLKPLEYWRGERVDYQ) is MIF2 homology domain II. Phosphoserine is present on residues Ser728 and Ser737. The Nuclear localization signal motif lies at 744–762 (KIKAQRNLGKVNKKVTKKP). Residue Lys770 forms a Glycyl lysine isopeptide (Lys-Gly) (interchain with G-Cter in SUMO2) linkage. Positions 853–906 (LVFYVNFGDLLCTLHETPYKLTTGDSFYVPSGNHYNIKNLLNVESSLLFTQIKR) are MIF2 homology domain III.

The protein belongs to the CENP-C/MIF2 family. Oligomer. Component of the CENPA-NAC complex, at least composed of CENPA, CENPC, CENPH, CENPM, CENPN, CENPT and CENPU. The CENPA-NAC complex interacts with the CENPA-CAD complex, composed of CENPI, CENPK, CENPL, CENPO, CENPP, CENPQ, CENPR and CENPS. Binds to DAXX. Interacts with DNMT3B. Interacts directly with CENPA. Identified in a centromere complex containing histones H2A, H2B and H4, and at least CENPA, CENPB, CENPC, CENPT, CENPN, HJURP, SUPT16H, SSRP1 and RSF1. Interacts with MEIKIN.

It is found in the nucleus. The protein localises to the chromosome. It localises to the centromere. The protein resides in the kinetochore. Its function is as follows. Component of the CENPA-NAC (nucleosome-associated) complex, a complex that plays a central role in assembly of kinetochore proteins, mitotic progression and chromosome segregation. The CENPA-NAC complex recruits the CENPA-CAD (nucleosome distal) complex and may be involved in incorporation of newly synthesized CENPA into centromeres. CENPC recruits DNA methylation and DNMT3B to both centromeric and pericentromeric satellite repeats and regulates the histone code in these regions. The sequence is that of Centromere protein C (Cenpc) from Mus musculus (Mouse).